The primary structure comprises 610 residues: UvrABC system protein C (610 aa).

A GIY-YIG domain is found at 16-94 (SQPGVYRMYD…IKLYQPRYNV (79 aa)). The region spanning 204 to 239 (DQVLTQLIARMEKASQDLAFEEAARIRDQIQAVRRV) is the UVR domain.

The protein belongs to the UvrC family. In terms of assembly, interacts with UvrB in an incision complex.

Its subcellular location is the cytoplasm. Functionally, the UvrABC repair system catalyzes the recognition and processing of DNA lesions. UvrC both incises the 5' and 3' sides of the lesion. The N-terminal half is responsible for the 3' incision and the C-terminal half is responsible for the 5' incision. The polypeptide is UvrABC system protein C (Salmonella agona (strain SL483)).